Reading from the N-terminus, the 131-residue chain is MSAKTDEILDSLKSLSLLEASELVKQIEEAFGVSAAASAGVVMAAPGAAAGGDGADAAEEKTEFEVVLESFDASSKIKVLKEVRNATGLGLGEAKALVEAAPKTIKEGATKEDAEALKKAIEAVGGKVTLK.

Belongs to the bacterial ribosomal protein bL12 family. As to quaternary structure, homodimer. Part of the ribosomal stalk of the 50S ribosomal subunit. Forms a multimeric L10(L12)X complex, where L10 forms an elongated spine to which 2 to 4 L12 dimers bind in a sequential fashion. Binds GTP-bound translation factors.

In terms of biological role, forms part of the ribosomal stalk which helps the ribosome interact with GTP-bound translation factors. Is thus essential for accurate translation. This Prochlorococcus marinus (strain NATL1A) protein is Large ribosomal subunit protein bL12.